We begin with the raw amino-acid sequence, 354 residues long: Ornithine transcarbamylase, mitochondrial (354 aa).

A mitochondrion-targeting transit peptide spans 1 to 32; the sequence is MLFNLKNLYRITKLTQNSKHLPRHFCRGPPNQ. Residues 90-94, Arg-141, and His-168 each bind carbamoyl phosphate; that span reads STRTR. Arg-141 is an L-ornithine binding site. Residues Asn-199, 263 to 267, 302 to 305, and Arg-330 each bind L-ornithine; these read DTWIS and HCLP. The active site involves Cys-303. Arg-330 is a carbamoyl phosphate binding site.

The protein belongs to the aspartate/ornithine carbamoyltransferase superfamily. OTCase family. As to quaternary structure, homotrimer. In terms of processing, cleavage of the precursor form to the active form occurs only in the kidney. Expressed in kidney, brain, heart, liver, pancreas, gizzard, small intestine and breast muscle. More abundant in mitochondrion-rich organs (heart, liver and brain) than in other organs. Activity is only detected in the kidney.

The protein resides in the mitochondrion matrix. The catalysed reaction is carbamoyl phosphate + L-ornithine = L-citrulline + phosphate + H(+). The protein operates within nitrogen metabolism; urea cycle; L-citrulline from L-ornithine and carbamoyl phosphate: step 1/1. Inhibition by ornithine increases at higher pH. Its function is as follows. Catalyzes the second step of the urea cycle, the condensation of carbamoyl phosphate with L-ornithine to form L-citrulline. The urea cycle ensures the detoxification of ammonia by converting it to urea for excretion. This chain is Ornithine transcarbamylase, mitochondrial, found in Gallus gallus (Chicken).